A 218-amino-acid polypeptide reads, in one-letter code: ATP phosphoribosyltransferase (218 aa).

This sequence belongs to the ATP phosphoribosyltransferase family. Short subfamily. In terms of assembly, heteromultimer composed of HisG and HisZ subunits.

The protein localises to the cytoplasm. It carries out the reaction 1-(5-phospho-beta-D-ribosyl)-ATP + diphosphate = 5-phospho-alpha-D-ribose 1-diphosphate + ATP. It participates in amino-acid biosynthesis; L-histidine biosynthesis; L-histidine from 5-phospho-alpha-D-ribose 1-diphosphate: step 1/9. Functionally, catalyzes the condensation of ATP and 5-phosphoribose 1-diphosphate to form N'-(5'-phosphoribosyl)-ATP (PR-ATP). Has a crucial role in the pathway because the rate of histidine biosynthesis seems to be controlled primarily by regulation of HisG enzymatic activity. This chain is ATP phosphoribosyltransferase (hisG), found in Deinococcus radiodurans (strain ATCC 13939 / DSM 20539 / JCM 16871 / CCUG 27074 / LMG 4051 / NBRC 15346 / NCIMB 9279 / VKM B-1422 / R1).